We begin with the raw amino-acid sequence, 82 residues long: Diphthamide biosynthesis protein 3 (82 aa).

Positions 3 to 59 (TYDEIEIEDMTFEPENQMFTYPCPCGDRFQIYLDDMFEGEKVAVCPSCSLMIDVVFD) constitute a DPH-type MB domain. Fe cation is bound by residues Cys-25, Cys-27, Cys-47, and Cys-50. The tract at residues 66-82 (YYEEAGIHPPEPIAAAA) is required for interaction with the elongator complex.

The protein belongs to the DPH3 family. In terms of assembly, component of the 2-(3-amino-3-carboxypropyl)histidine synthase complex composed of DPH1, DPH2, KTI11/DPH3 and a NADH-dependent reductase, predominantly CBR1. Interacts with DPH1. Interacts with DPH2. Interacts with CBR1. Interacts with elongation factor 2. Interacts with ATS1/KTI13; the interaction is direct. Interacts with the 40S ribosomal protein RPS7A. Interacts with the 40S ribosomal protein RPS19A. Interacts with the elongator complex subunit IKI3/ELP1. Interacts with the elongator complex subunit ELP2. Interacts with the elongator complex subunit ELP3. Interacts with the elongator complex subunit ELP5.

The protein localises to the cytoplasm. It localises to the nucleus. The enzyme catalyses [3Fe-4S](1+)-[protein] + Fe(2+)-[Dph3] = [3Fe-4S](0)-[protein] + Fe(3+)-[Dph3]. It carries out the reaction 2 [3Fe-4S](0)-[protein] + 2 Fe(2+)-[Dph3] + NADH = 2 [4Fe-4S](1+)-[protein] + 2 [Dph3] + NAD(+) + H(+). It functions in the pathway protein modification; peptidyl-diphthamide biosynthesis. In terms of biological role, required for the first step of diphthamide biosynthesis, a post-translational modification of histidine which occurs in elongation factor 2. DPH1 and DPH2 transfer a 3-amino-3-carboxypropyl (ACP) group from S-adenosyl-L-methionine (SAM) to a histidine residue, the reaction is assisted by a reduction system comprising KTI11/DPH3 and a NADH-dependent reductase, predominantly CBR1. Acts as an electron donor to reduce the Fe-S cluster in DPH1-DPH2 keeping the [4Fe-4S] clusters in the active and reduced state. Restores iron to DPH1-DPH2 iron-sulfur clusters which have degraded from [4Fe-4S] to [3Fe-4S] by donating an iron atom to reform [4Fe-4S] clusters, in a manner dependent on the presence of elongation factor 2 and SAM. Together with ATS1; associates with the elongator complex and is required for tRNA Wobble base modifications mediated by the elongator complex. The elongator complex is required for multiple tRNA modifications, including mcm5U (5-methoxycarbonylmethyl uridine), mcm5s 2U (5-methoxycarbonylmethyl-2-thiouridine), and ncm5U (5-carbamoylmethyl uridine). The polypeptide is Diphthamide biosynthesis protein 3 (Saccharomyces cerevisiae (strain ATCC 204508 / S288c) (Baker's yeast)).